Consider the following 145-residue polypeptide: D-aminoacyl-tRNA deacylase (145 aa).

The Gly-cisPro motif, important for rejection of L-amino acids signature appears at glycine 137 to proline 138.

It belongs to the DTD family. In terms of assembly, homodimer.

The protein resides in the cytoplasm. It carries out the reaction glycyl-tRNA(Ala) + H2O = tRNA(Ala) + glycine + H(+). The catalysed reaction is a D-aminoacyl-tRNA + H2O = a tRNA + a D-alpha-amino acid + H(+). An aminoacyl-tRNA editing enzyme that deacylates mischarged D-aminoacyl-tRNAs. Also deacylates mischarged glycyl-tRNA(Ala), protecting cells against glycine mischarging by AlaRS. Acts via tRNA-based rather than protein-based catalysis; rejects L-amino acids rather than detecting D-amino acids in the active site. By recycling D-aminoacyl-tRNA to D-amino acids and free tRNA molecules, this enzyme counteracts the toxicity associated with the formation of D-aminoacyl-tRNA entities in vivo and helps enforce protein L-homochirality. This chain is D-aminoacyl-tRNA deacylase, found in Pectobacterium carotovorum subsp. carotovorum (strain PC1).